A 343-amino-acid chain; its full sequence is Sodium/bile acid cotransporter 7 (343 aa).

Over 1–10 (MGLLERLRKE) the chain is Cytoplasmic. The chain crosses the membrane as a helical span at residues 11–31 (WFIVGIILVIAAAKLEPTIGG). The Extracellular segment spans residues 32–37 (KGGPLK). The chain crosses the membrane as a helical span at residues 38–58 (PEITITYIAVSAIFFNSGLSL). Residues 59 to 71 (KTEELTNALMHVK) lie on the Cytoplasmic side of the membrane. A helical membrane pass occupies residues 72–92 (LHLFVQLFTLVFFPTAIWVFL). The Extracellular segment spans residues 93 to 116 (QVLSLTPINEWLLKGLQTVSCMPP). Residues 117 to 137 (PVSSAVILTKAVGGNEAAAIF) traverse the membrane as a helical segment. A topological domain (cytoplasmic) is located at residue asparagine 138. A helical membrane pass occupies residues 139–159 (SAFGSFLGIVVTPLLLLLFLG). Residues 160–163 (SSSS) are Extracellular-facing. The chain crosses the membrane as a helical span at residues 164-184 (VPFTSIFSQLFMTVVVPLIIG). Over 185 to 201 (QIVRRYIKDWLERKKPP) the chain is Cytoplasmic. A helical transmembrane segment spans residues 202–222 (FGAISSCVLLMIIYTTFCDTF). At 223–234 (SNPNIDLDTFSL) the chain is on the extracellular side. A helical membrane pass occupies residues 235 to 255 (VIIVFIIFFIQLAFMLLTFLF). Over 256 to 270 (STSKNTGFTPADTVA) the chain is Cytoplasmic. Residues 271–291 (IVFCSTHKSLTLGIPMLKIVF) traverse the membrane as a helical segment. The Extracellular portion of the chain corresponds to 292 to 298 (AGYEHLS). The helical transmembrane segment at 299–319 (LISVPLLIYHPAQILLGSVLV) threads the bilayer. At 320 to 343 (PTIKSWMLSRQKALKLTRQPKVPL) the chain is on the cytoplasmic side.

It belongs to the bile acid:sodium symporter (BASS) (TC 2.A.28) family.

Its subcellular location is the cell membrane. The protein localises to the endoplasmic reticulum membrane. It is found in the golgi apparatus membrane. Functionally, involved in teeth and skeletal development. Has an essential role in the biosynthesis and trafficking of glycosaminoglycans and glycoproteins to produce a proper functioning extracellular matrix. Required for extracellular matrix mineralization. Also involved in the regulation of cellular calcium homeostasis. Does not show transport activity towards bile acids or steroid sulfates. The chain is Sodium/bile acid cotransporter 7 (slc10a7) from Xenopus tropicalis (Western clawed frog).